The sequence spans 188 residues: Sec-independent protein translocase protein TatB (188 aa).

The helical transmembrane segment at 1 to 21 threads the bilayer; sequence MFDIGWSELVVIGVVALVAIG. The segment at 147–188 is disordered; the sequence is LPVPAETHALATTDLAPPDLAHPAPAHPEPTNSEPAKDAKAS. The segment covering 160-170 has biased composition (low complexity); sequence DLAPPDLAHPA.

The protein belongs to the TatB family. As to quaternary structure, the Tat system comprises two distinct complexes: a TatABC complex, containing multiple copies of TatA, TatB and TatC subunits, and a separate TatA complex, containing only TatA subunits. Substrates initially bind to the TatABC complex, which probably triggers association of the separate TatA complex to form the active translocon.

The protein resides in the cell inner membrane. Part of the twin-arginine translocation (Tat) system that transports large folded proteins containing a characteristic twin-arginine motif in their signal peptide across membranes. Together with TatC, TatB is part of a receptor directly interacting with Tat signal peptides. TatB may form an oligomeric binding site that transiently accommodates folded Tat precursor proteins before their translocation. This Rhodopseudomonas palustris (strain HaA2) protein is Sec-independent protein translocase protein TatB.